The chain runs to 883 residues: Phosphoenolpyruvate carboxylase (883 aa).

Active-site residues include H138 and K546.

The protein belongs to the PEPCase type 1 family. It depends on Mg(2+) as a cofactor.

The catalysed reaction is oxaloacetate + phosphate = phosphoenolpyruvate + hydrogencarbonate. In terms of biological role, forms oxaloacetate, a four-carbon dicarboxylic acid source for the tricarboxylic acid cycle. In Klebsiella pneumoniae (strain 342), this protein is Phosphoenolpyruvate carboxylase.